The primary structure comprises 396 residues: MAKLDAYFGEYGGQYVPQILVPALEQLEQAFIDAQEDPDFRSEFMTLLQEYAGRPTALTLCRNLTKGTKTKLYLKREDLLHGGAHKTNQVLGQALLAKRMGKDEIIAETGAGQHGVATALACALLGLKCRVYMGAKDVERQSPNVFRMKLMGAEVIPVHSGSATLKDACNEALRDWSATYETAHYLLGTAAGPHPFPTIVREFQRMIGEETKMQILAREGRLPDAVIACVGGGSNAIGMFADFIEEESVKLIGVEPAGKGIDTDQHGAPLKHGKTGIFFGMKAPLMQDEHGQIEESYSVSAGLDFPSVGPQHAHLNAIGRAEYGAVTDDEALDAFKILARNEGIIPALESSHALAYALQLAQAEPEKEQLLVVNLSGRGDKDIFTVHDILKEKGEI.

Lysine 86 carries the post-translational modification N6-(pyridoxal phosphate)lysine.

It belongs to the TrpB family. As to quaternary structure, tetramer of two alpha and two beta chains. Pyridoxal 5'-phosphate is required as a cofactor.

It carries out the reaction (1S,2R)-1-C-(indol-3-yl)glycerol 3-phosphate + L-serine = D-glyceraldehyde 3-phosphate + L-tryptophan + H2O. It participates in amino-acid biosynthesis; L-tryptophan biosynthesis; L-tryptophan from chorismate: step 5/5. The beta subunit is responsible for the synthesis of L-tryptophan from indole and L-serine. The protein is Tryptophan synthase beta chain of Aliivibrio fischeri (strain ATCC 700601 / ES114) (Vibrio fischeri).